The chain runs to 452 residues: Poly(A) polymerase I (452 aa).

Active-site residues include D68, D70, and D150. The segment at 427-452 (EQQRLHPKPKKKYYRPRRRKTTCSAE) is disordered. Positions 431–452 (LHPKPKKKYYRPRRRKTTCSAE) are enriched in basic residues.

It belongs to the tRNA nucleotidyltransferase/poly(A) polymerase family.

It catalyses the reaction RNA(n) + ATP = RNA(n)-3'-adenine ribonucleotide + diphosphate. Its function is as follows. Adds poly(A) tail to the 3' end of many RNAs, which usually targets these RNAs for decay. Plays a significant role in the global control of gene expression, through influencing the rate of transcript degradation, and in the general RNA quality control. This chain is Poly(A) polymerase I, found in Haemophilus influenzae (strain ATCC 51907 / DSM 11121 / KW20 / Rd).